The chain runs to 223 residues: Ubiquitin-conjugating enzyme E2 S-A (223 aa).

In terms of domain architecture, UBC core spans H11–G157. C95 (glycyl thioester intermediate) is an active-site residue. The disordered stretch occupies residues Q170–L223. A compositionally biased stretch (basic residues) spans A209–L223.

This sequence belongs to the ubiquitin-conjugating enzyme family.

It carries out the reaction S-ubiquitinyl-[E1 ubiquitin-activating enzyme]-L-cysteine + [E2 ubiquitin-conjugating enzyme]-L-cysteine = [E1 ubiquitin-activating enzyme]-L-cysteine + S-ubiquitinyl-[E2 ubiquitin-conjugating enzyme]-L-cysteine.. Its pathway is protein modification; protein ubiquitination. Its function is as follows. Catalyzes the covalent attachment of ubiquitin to other proteins. Acts as an essential factor of the anaphase promoting complex/cyclosome (APC/C), a cell cycle-regulated ubiquitin ligase that controls progression through mitosis. Acts by specifically elongating 'Lys-11'-linked polyubiquitin chains initiated by the E2 enzyme ube2c/ubch10 on APC/C substrates, enhancing the degradation of APC/C substrates by the proteasome and promoting mitotic exit. In Xenopus laevis (African clawed frog), this protein is Ubiquitin-conjugating enzyme E2 S-A (ube2s-a).